The chain runs to 679 residues: MDHLLLKTQTQTEQVMNVTNPNSIYIKGRLYFKGYKKIELHCFVDTGASLCIASKFVIPEEHWVNAERPIMVKIADGSSITISKVCKDIDLIIAGEIFRIPTVYQQESGIDFIIGNNFCQLYEPFIQFTDRVIFTKNKSYPVHIAKLTRAVRVGTEGFLESMKKRSKTQQPEPVNISTNKIENPLEEIAILSEGRRLSEEKLFITQQRMQKIEELLEKVCSENPLDPNKTKQWMKASIKLSDPSKAIKVKPMKYSPMDREEFDKQIKELLDLKVIKPSKSPHMAPAFLVNNEAEKRRGKKRMVVNYKAMNKATVGDAYNLPNKDELLTLIRGKKIFSSFDCKSGFWQVLLDQESRPLTAFTCPQGHYEWNVVPFGLKQAPSIFQRHMDEAFRVFRKFCCVYVDDILVFSNNEEDHLLHVAMILQKCNQHGIILSKKKAQLFKKKINFLGLEIDEGTHKPQGHILEHINKFPDTLEDKKQLQRFLGILTYASDYIPKLAQIRKPLQAKLKENVPWRWTKEDTLYMQKVKKNLQGFPPLHHPLPEEKLIIETDASDDYWGGMLKAIKINEGTNTELICRYASGSFKAAEKNYHSNDKETLAVINTIKKFSIYLTPVHFLIRTDNTHFKSFVNLNYKGDSKLGRNIRWQAWLSHYSFDVEHIKGTDNHFADFLSREFNKVNS.

The interval 40–130 (LHCFVDTGAS…LYEPFIQFTD (91 aa)) is protease. Residue Asp-45 is part of the active site. Residues 272–452 (LKVIKPSKSP…KKINFLGLEI (181 aa)) enclose the Reverse transcriptase domain.

The protein belongs to the caulimoviridae enzymatic polyprotein family.

The catalysed reaction is DNA(n) + a 2'-deoxyribonucleoside 5'-triphosphate = DNA(n+1) + diphosphate. Functionally, encodes for at least two polypeptides: protease (PR) and reverse transcriptase (RT). The protease processes the polyprotein in cis. Reverse transcriptase is multifunctional enzyme that converts the viral RNA genome into dsDNA in viral cytoplasmic capsids. This enzyme displays a DNA polymerase activity that can copy either DNA or RNA templates, and a ribonuclease H (RNase H) activity that cleaves the RNA strand of RNA-DNA heteroduplexes in a partially processive 3'- to 5'-endonucleasic mode. Neo-synthesized pregenomic RNA (pgRNA) are encapsidated, and reverse-transcribed inside the nucleocapsid. Partial (+)DNA is synthesized from the (-)DNA template and generates the relaxed circular DNA (RC-DNA) genome. After budding and infection, the RC-DNA migrates in the nucleus, and is converted into a plasmid-like covalently closed circular DNA (cccDNA). In Arabidopsis thaliana (Mouse-ear cress), this protein is Enzymatic polyprotein.